A 256-amino-acid polypeptide reads, in one-letter code: Homeobox protein TGIF2LX (256 aa).

Residues 1-45 form a disordered region; the sequence is MEAAADSPAETRSRVEKDSRRVEKDSRRPKKDSPAKTQSPAQDTS. Residues 9–34 show a composition bias toward basic and acidic residues; the sequence is AETRSRVEKDSRRVEKDSRRPKKDSP. The span at 35 to 45 shows a compositional bias: polar residues; sequence AKTQSPAQDTS. The homeobox; TALE-type DNA-binding region spans 62-125; the sequence is EHKKKRKGYL…INARRRILPD (64 aa). A disordered region spans residues 136–224; that stretch reads VGHKTGKDAN…SSSPEPVSTE (89 aa). The span at 166 to 179 shows a compositional bias: polar residues; sequence DNVQSLPLRSSPKG. A compositionally biased stretch (low complexity) spans 209-224; sequence VSNITSSSSPEPVSTE.

This sequence belongs to the TALE/TGIF homeobox family.

The protein resides in the nucleus. Functionally, may have a transcription role in testis. This chain is Homeobox protein TGIF2LX (TGIF2LX), found in Papio hamadryas (Hamadryas baboon).